A 129-amino-acid chain; its full sequence is SOSS complex subunit C homolog (129 aa).

The tract at residues 105–129 (RLEPLPSPATTPTTPNAPPSHNISK) is disordered.

The protein belongs to the SOSS-C family.

The chain is SOSS complex subunit C homolog from Drosophila erecta (Fruit fly).